Here is a 146-residue protein sequence, read N- to C-terminus: Transcriptional regulator MraZ (146 aa).

SpoVT-AbrB domains are found at residues 5–52 (SAAL…PRAE) and 81–124 (AAEI…KEES).

It belongs to the MraZ family. As to quaternary structure, forms oligomers.

It localises to the cytoplasm. The protein localises to the nucleoid. In Alcanivorax borkumensis (strain ATCC 700651 / DSM 11573 / NCIMB 13689 / SK2), this protein is Transcriptional regulator MraZ.